A 318-amino-acid polypeptide reads, in one-letter code: Aspartate carbamoyltransferase catalytic subunit (318 aa).

Positions 58 and 59 each coordinate carbamoyl phosphate. An L-aspartate-binding site is contributed by Lys-86. The carbamoyl phosphate site is built by Arg-108, His-141, and Gln-144. Residues Arg-174 and Arg-226 each coordinate L-aspartate. Gly-270 and Pro-271 together coordinate carbamoyl phosphate.

It belongs to the aspartate/ornithine carbamoyltransferase superfamily. ATCase family. Heterododecamer (2C3:3R2) of six catalytic PyrB chains organized as two trimers (C3), and six regulatory PyrI chains organized as three dimers (R2).

It catalyses the reaction carbamoyl phosphate + L-aspartate = N-carbamoyl-L-aspartate + phosphate + H(+). It functions in the pathway pyrimidine metabolism; UMP biosynthesis via de novo pathway; (S)-dihydroorotate from bicarbonate: step 2/3. Its function is as follows. Catalyzes the condensation of carbamoyl phosphate and aspartate to form carbamoyl aspartate and inorganic phosphate, the committed step in the de novo pyrimidine nucleotide biosynthesis pathway. The protein is Aspartate carbamoyltransferase catalytic subunit of Lactobacillus acidophilus (strain ATCC 700396 / NCK56 / N2 / NCFM).